A 205-amino-acid chain; its full sequence is Guanylate kinase (205 aa).

Residues 3–183 enclose the Guanylate kinase-like domain; the sequence is GFVLLISGPS…SYEALRAILI (181 aa). 10 to 17 provides a ligand contact to ATP; sequence GPSGAGKS.

Belongs to the guanylate kinase family.

It is found in the cytoplasm. It carries out the reaction GMP + ATP = GDP + ADP. Its function is as follows. Essential for recycling GMP and indirectly, cGMP. This Campylobacter jejuni (strain RM1221) protein is Guanylate kinase.